We begin with the raw amino-acid sequence, 267 residues long: Undecaprenyl-diphosphatase (267 aa).

A run of 8 helical transmembrane segments spans residues methionine 1–isoleucine 21, glutamine 39–phenylalanine 59, serine 83–phenylalanine 103, leucine 111–valine 131, alanine 149–isoleucine 169, phenylalanine 189–methionine 209, leucine 218–leucine 238, and methionine 246–leucine 266.

This sequence belongs to the UppP family.

The protein resides in the cell inner membrane. The catalysed reaction is di-trans,octa-cis-undecaprenyl diphosphate + H2O = di-trans,octa-cis-undecaprenyl phosphate + phosphate + H(+). Functionally, catalyzes the dephosphorylation of undecaprenyl diphosphate (UPP). Confers resistance to bacitracin. The chain is Undecaprenyl-diphosphatase from Aliivibrio fischeri (strain ATCC 700601 / ES114) (Vibrio fischeri).